The sequence spans 953 residues: uncharacterized protein (953 aa).

Transmembrane regions (helical) follow at residues 23-43, 103-123, 148-168, 392-412, 435-455, 481-501, 540-560, 575-595, 599-619, 642-662, and 666-686; these read VVTSLVSNGTIFGVFVIAFLI, YLFIIAIYCAVSMSYIFPILL, GRYFAHVFCGWIFFWGFLYII, VSAIVALVILWAFPVAFVGMI, LLGLLTSLAPTVALAVLMSFL, AYFAFQVIQVFLVTTLSSAAT, ISSGALLQIVPLILFYVLGAF, LSSMQWGTAFPVYTNLAVITF, IISPLILLFAAVAFFLLYIAY, LFQTIVGIYIGQICLLGLFAV, and WGPIVLQVIGICVTVLIHLHL. A disordered region spans residues 910-953; the sequence is VPPPYNDVKDEANGEANGEFDTASKENNPFADPKYKEEESRSAV. Over residues 942–953 the composition is skewed to basic and acidic residues; it reads PKYKEEESRSAV. Position 949 is a phosphoserine (Ser-949).

Belongs to the CSC1 (TC 1.A.17) family.

It is found in the membrane. Acts as an osmosensitive calcium-permeable cation channel. This is an uncharacterized protein from Saccharomyces cerevisiae (strain ATCC 204508 / S288c) (Baker's yeast).